Consider the following 448-residue polypeptide: tRNA methyltransferase 10 homolog C (448 aa).

The transit peptide at 1-48 directs the protein to the mitochondrion; that stretch reads MAFVNTLLRTIRCSAVHTLVQEGRSLSLLKASHQLTQSRKIMLSNHVR. A coiled-coil region spans residues 137-165; sequence REVMKTNRKEKKKELKESKSKIESLDQLE. The segment at 144-167 is disordered; the sequence is RKEKKKELKESKSKIESLDQLETK. An SAM-dependent MTase TRM10-type domain is found at 190–382; sequence QRWKCVQAMK…SFVPNRKHDG (193 aa). A disordered region spans residues 429-448; the sequence is ERTDDTSIRSTRKRWWEEEN.

The protein belongs to the class IV-like SAM-binding methyltransferase superfamily. TRM10 family. As to quaternary structure, component of mitochondrial ribonuclease P. Interacts with HSD17B10/MRPP2.

The protein resides in the mitochondrion matrix. It localises to the mitochondrion nucleoid. It carries out the reaction adenosine(9) in tRNA + S-adenosyl-L-methionine = N(1)-methyladenosine(9) in tRNA + S-adenosyl-L-homocysteine + H(+). The catalysed reaction is guanosine(9) in tRNA + S-adenosyl-L-methionine = N(1)-methylguanosine(9) in tRNA + S-adenosyl-L-homocysteine + H(+). It catalyses the reaction an adenosine in mRNA + S-adenosyl-L-methionine = an N(1)-methyladenosine in mRNA + S-adenosyl-L-homocysteine + H(+). Mitochondrial tRNA N(1)-methyltransferase involved in mitochondrial tRNA maturation. Component of mitochondrial ribonuclease P, which cleaves tRNA molecules in their 5'-ends. Together with hsd17b10/mrpp2, forms a subcomplex of the mitochondrial ribonuclease P, named MRPP1-MRPP2 subcomplex, which displays functions that are independent of the ribonuclease P activity. The MRPP1-MRPP2 subcomplex catalyzes the formation of N(1)-methylguanine and N(1)-methyladenine at position 9 (m1G9 and m1A9, respectively) in tRNAs; trmt10c/mrpp1 acting as the catalytic N(1)-methyltransferase subunit. The MRPP1-MRPP2 subcomplex also acts as a tRNA maturation platform: following 5'-end cleavage by the mitochondrial ribonuclease P complex, the MRPP1-MRPP2 subcomplex enhances the efficiency of 3'-processing catalyzed by ELAC2, retains the tRNA product after elac2 processing and presents the nascent tRNA to the mitochondrial CCA tRNA nucleotidyltransferase TRNT1 enzyme. In addition to tRNA N(1)-methyltransferase activity, trmt10c/mrpp1 also acts as a mRNA N(1)-methyltransferase by mediating methylation of adenosine residues at the N(1) position of MT-ND5 mRNA. The chain is tRNA methyltransferase 10 homolog C from Xenopus tropicalis (Western clawed frog).